The chain runs to 312 residues: Glyoxylate/hydroxypyruvate reductase A (312 aa).

R227 is an active-site residue. H275 (proton donor) is an active-site residue.

It belongs to the D-isomer specific 2-hydroxyacid dehydrogenase family. GhrA subfamily.

It is found in the cytoplasm. It catalyses the reaction glycolate + NADP(+) = glyoxylate + NADPH + H(+). The catalysed reaction is (R)-glycerate + NAD(+) = 3-hydroxypyruvate + NADH + H(+). It carries out the reaction (R)-glycerate + NADP(+) = 3-hydroxypyruvate + NADPH + H(+). Functionally, catalyzes the NADPH-dependent reduction of glyoxylate and hydroxypyruvate into glycolate and glycerate, respectively. The protein is Glyoxylate/hydroxypyruvate reductase A of Salmonella enteritidis PT4 (strain P125109).